The sequence spans 131 residues: Small ribosomal subunit protein eS8 (131 aa).

Positions 1–42 are disordered; that stretch reads MKLGAYYKGGDLKKPSGGKKRKVRKTKKKALGGGPPQIPKLG. A compositionally biased stretch (basic residues) spans 16–30; that stretch reads SGGKKRKVRKTKKKA.

The protein belongs to the eukaryotic ribosomal protein eS8 family. Part of the 30S ribosomal subunit.

The protein is Small ribosomal subunit protein eS8 of Pyrobaculum aerophilum (strain ATCC 51768 / DSM 7523 / JCM 9630 / CIP 104966 / NBRC 100827 / IM2).